A 351-amino-acid chain; its full sequence is CCN family member 3 (351 aa).

A signal peptide spans 1 to 21 (MSVFLRKQCLCLGFLLLHLLN). The IGFBP N-terminal domain occupies 25–99 (ATLRCPSRCP…NNETGICMVP (75 aa)). Intrachain disulfides connect Cys29–Cys55, Cys33–Cys57, Cys37–Cys58, Cys44–Cys61, Cys69–Cys83, and Cys75–Cys96. Residue Asn91 is glycosylated (N-linked (GlcNAc...) asparagine). Residues 102-168 (DNCVFDGVIY…GECCEKWTCG (67 aa)) form the VWFC domain. The 46-residue stretch at 199–244 (NCIEQTTEWSACSKSCGMGLSTRVTNRNLQCEMVKQTRLCMVRPCE) folds into the TSP type-1 domain. The S-palmitoyl cysteine moiety is linked to residue Cys238. Intrachain disulfides connect Cys258/Cys295, Cys275/Cys309, Cys286/Cys325, Cys289/Cys327, and Cys294/Cys331. Residues 258 to 332 (CLRTKKSLKS…GTCTCHSNCP (75 aa)) form the CTCK domain. N-linked (GlcNAc...) asparagine glycosylation occurs at Asn274.

This sequence belongs to the CCN family. Interacts with FBLN1. Interacts (via CTCK domain) with NOTCH1 (via the EGF-like repeat region). Interacts with GJA1/CX43. Interacts with ITGA5:ITGB1, ITGAV:ITGB3 and ITGAV:ITGB5. Interacts with ZDHHC22; the interaction may lead to CCN3 palmitoylation. Post-translationally, may be palmitoylated on Cys-238, which is important for extracellular secretion. Widely expressed. Highly expressed in neurons of dorsal root ganglia and dorsal horn of the spinal cord (at protein level). Expressed in astrocytes (at protein level). In cartilage, dominantly expressed in the chondrocyte territorial matrix.

It is found in the secreted. Its subcellular location is the cytoplasm. It localises to the cell junction. The protein localises to the gap junction. Its function is as follows. Immediate-early protein playing a role in various cellular processes including proliferation, adhesion, migration, differentiation and survival. Acts by binding to integrins or membrane receptors such as NOTCH1. Essential regulator of hematopoietic stem and progenitor cell function. Inhibits myogenic differentiation through the activation of Notch-signaling pathway. Inhibits vascular smooth muscle cells proliferation by increasing expression of cell-cycle regulators such as CDKN2B or CDKN1A independently of TGFB1 signaling. Ligand of integrins ITGAV:ITGB3 and ITGA5:ITGB1, acts directly upon endothelial cells to stimulate pro-angiogenic activities and induces angiogenesis. In endothelial cells, supports cell adhesion, induces directed cell migration (chemotaxis) and promotes cell survival. Also plays a role in cutaneous wound healing acting as integrin receptor ligand. Supports skin fibroblast adhesion through ITGA5:ITGB1 and ITGA6:ITGB1 and induces fibroblast chemotaxis through ITGAV:ITGB5. Seems to enhance bFGF-induced DNA synthesis in fibroblasts. Involved in bone regeneration as a negative regulator. Enhances the articular chondrocytic phenotype, whereas it repressed the one representing endochondral ossification. Impairs pancreatic beta-cell function, inhibits beta-cell proliferation and insulin secretion. Plays a role as negative regulator of endothelial pro-inflammatory activation reducing monocyte adhesion, its anti-inflammatory effects occur secondary to the inhibition of NF-kappaB signaling pathway. Contributes to the control and coordination of inflammatory processes in atherosclerosis. Attenuates inflammatory pain through regulation of IL1B- and TNF-induced MMP9, MMP2 and CCL2 expression. Inhibits MMP9 expression through ITGB1 engagement. Brain osteoanabolic hormone. During lactation, maintains the maternal skeleton and viability of offspring. This chain is CCN family member 3 (Ccn3), found in Rattus norvegicus (Rat).